Consider the following 312-residue polypeptide: Glyoxylate/hydroxypyruvate reductase A (312 aa).

Residue R227 is part of the active site. The Proton donor role is filled by H275.

This sequence belongs to the D-isomer specific 2-hydroxyacid dehydrogenase family. GhrA subfamily.

Its subcellular location is the cytoplasm. The enzyme catalyses glycolate + NADP(+) = glyoxylate + NADPH + H(+). The catalysed reaction is (R)-glycerate + NAD(+) = 3-hydroxypyruvate + NADH + H(+). It carries out the reaction (R)-glycerate + NADP(+) = 3-hydroxypyruvate + NADPH + H(+). Its function is as follows. Catalyzes the NADPH-dependent reduction of glyoxylate and hydroxypyruvate into glycolate and glycerate, respectively. The polypeptide is Glyoxylate/hydroxypyruvate reductase A (Salmonella paratyphi C (strain RKS4594)).